Consider the following 869-residue polypeptide: Aminopeptidase N (869 aa).

Residues E122 and G262–N266 each bind substrate. H298 contacts Zn(2+). E299 serves as the catalytic Proton acceptor. Zn(2+)-binding residues include H302 and E321.

Belongs to the peptidase M1 family. Zn(2+) serves as cofactor.

Its subcellular location is the cell inner membrane. The catalysed reaction is Release of an N-terminal amino acid, Xaa-|-Yaa- from a peptide, amide or arylamide. Xaa is preferably Ala, but may be most amino acids including Pro (slow action). When a terminal hydrophobic residue is followed by a prolyl residue, the two may be released as an intact Xaa-Pro dipeptide.. In terms of biological role, aminopeptidase N is involved in the degradation of intracellular peptides generated by protein breakdown during normal growth as well as in response to nutrient starvation. This is Aminopeptidase N (pepN) from Haemophilus influenzae (strain ATCC 51907 / DSM 11121 / KW20 / Rd).